We begin with the raw amino-acid sequence, 232 residues long: uncharacterized protein (232 aa).

The first 18 residues, 1-18 (MGILKSLFTLGKSFISQA), serve as a signal peptide directing secretion. The interval 207–232 (AEAGIGGSNKSSAQDVLARLQRQQGE) is disordered.

The protein belongs to the PspA/Vipp/IM30 family.

This is an uncharacterized protein from Escherichia coli O6:H1 (strain CFT073 / ATCC 700928 / UPEC).